The primary structure comprises 167 residues: MIYIDNRQNKIKAQEDLDKLINEIIDYALKKEEVDIGYEISVIYVDNEIIKEINNDTRGINKETDVLSFPMLEYPKGRVFSESYREYSFGVEYLNEGNLVLGDIVLSLEKALEQSKEYNHSFLREVCYLVVHSVLHLLGYDHIDEEEKVIMRKKEEEILESFNISRG.

Residues His-132, His-136, and His-142 each coordinate Zn(2+).

It belongs to the endoribonuclease YbeY family. Requires Zn(2+) as cofactor.

Its subcellular location is the cytoplasm. In terms of biological role, single strand-specific metallo-endoribonuclease involved in late-stage 70S ribosome quality control and in maturation of the 3' terminus of the 16S rRNA. This Clostridium tetani (strain Massachusetts / E88) protein is Endoribonuclease YbeY.